An 875-amino-acid polypeptide reads, in one-letter code: Probable ATP-dependent RNA helicase DDX10 (875 aa).

Residues 1–43 (MGKTANSPGSGARPDPVRSFNRWKKKHSHRQNKKKQLRKQLKK) form a disordered region. Position 4 is a phosphothreonine (threonine 4). At serine 7 the chain carries Phosphoserine. Residues 21-41 (NRWKKKHSHRQNKKKQLRKQL) are compositionally biased toward basic residues. A Q motif motif is present at residues 69–97 (TRFSDFPLSKKTLKGLQEAQYRLVTEIQK). ATP contacts are provided by residues 89-91 (YRL), glutamine 96, and 113-120 (AKTGSGKT). Positions 100–274 (IGLALQGKDV…RLSLKNPEYV (175 aa)) constitute a Helicase ATP-binding domain. Residues 222 to 225 (DEAD) carry the DEAD box motif. Positions 287–448 (TLEQNYIVCE…EIKINPEKLI (162 aa)) constitute a Helicase C-terminal domain. Serine 539 is subject to Phosphoserine. Lysine 555 carries the post-translational modification N6-acetyllysine. The disordered stretch occupies residues 562-631 (GGKRLEGTEH…QFLDRDEEEE (70 aa)). Residues 564 to 575 (KRLEGTEHRQDN) are compositionally biased toward basic and acidic residues. The residue at position 577 (threonine 577) is a Phosphothreonine. Acidic residues predominate over residues 577–593 (TGNEEQEEEEDDEEEME). Positions 603–613 (QAPSLPNTSEA) are enriched in polar residues. A Glycyl lysine isopeptide (Lys-Gly) (interchain with G-Cter in SUMO2) cross-link involves residue lysine 649. The tract at residues 703 to 850 (MQKSAIKDAE…HNRKKARWDT (148 aa)) is disordered. The segment covering 727–741 (ERLQEEDKFDKEEYR) has biased composition (basic and acidic residues). Over residues 742–751 (KKIKAKHREK) the composition is skewed to basic residues. Over residues 752-771 (RLKEREARREANKRQAKAKD) the composition is skewed to basic and acidic residues. The span at 772–790 (EEEAFLDWSDDDDDDDDGF) shows a compositional bias: acidic residues. Serine 780 is modified (phosphoserine). The span at 812 to 821 (MENKISDTKK) shows a compositional bias: basic and acidic residues. Residue serine 831 is modified to Phosphoserine.

This sequence belongs to the DEAD box helicase family. DDX10/DBP4 subfamily. Interacts with AIM2; this interaction promotes AIM2 stability. Interacts with SCNA; this interaction causes DDX10 mislocalization to the nucleoplasm and cytoplasmic inclusions. In terms of tissue distribution, high in testis but widely expressed.

The protein resides in the cytoplasm. Its subcellular location is the nucleus. The protein localises to the nucleolus. It catalyses the reaction ATP + H2O = ADP + phosphate + H(+). Functionally, putative ATP-dependent RNA helicase that plays various role in innate immunity or inflammation. Plays a role in the enhancement of AIM2-induced inflammasome activation by interacting with AIM2 and stabilizing its protein level. Negatively regulates viral infection by promoting interferon beta production and interferon stimulated genes/ISGs expression. The polypeptide is Probable ATP-dependent RNA helicase DDX10 (DDX10) (Homo sapiens (Human)).